A 172-amino-acid polypeptide reads, in one-letter code: Ribosome maturation factor RimP (172 aa).

It belongs to the RimP family.

The protein resides in the cytoplasm. In terms of biological role, required for maturation of 30S ribosomal subunits. This chain is Ribosome maturation factor RimP, found in Chlorobium phaeovibrioides (strain DSM 265 / 1930) (Prosthecochloris vibrioformis (strain DSM 265)).